The sequence spans 394 residues: Guanine nucleotide-binding protein G(s) subunit alpha (394 aa).

A disordered region spans residues 1–23 (MGCLGNSKTEDQRNEEKAQREAN). G2 carries the N-palmitoyl glycine lipid modification. C3 carries S-palmitoyl cysteine lipidation. Positions 8-23 (KTEDQRNEEKAQREAN) are enriched in basic and acidic residues. In terms of domain architecture, G-alpha spans 39-394 (ATHRLLLLGA…RMHLRQYELL (356 aa)). The interval 42-55 (RLLLLGAGESGKST) is G1 motif. 47 to 55 (GAGESGKST) contributes to the GTP binding site. S54 provides a ligand contact to Mg(2+). The disordered stretch occupies residues 68–90 (FNGEGGEEDPQAARSNSDGEKAT). Residues 196–204 (DLLRCRVLT) form a G2 motif region. GTP contacts are provided by residues 197 to 204 (LLRCRVLT), 223 to 227 (DVGGQ), 292 to 295 (NKQD), and A366. T204 contributes to the Mg(2+) binding site. The tract at residues 219–228 (FHMFDVGGQR) is G3 motif. Positions 288-295 (ILFLNKQD) are G4 motif. Positions 364 to 369 (TCAVDT) are G5 motif.

The protein belongs to the G-alpha family. G(s) subfamily. As to quaternary structure, heterotrimeric G proteins are composed of 3 units; alpha, beta and gamma. The alpha chain contains the guanine nucleotide binding site. Interacts with CRY1; the interaction may block GPCR-mediated regulation of cAMP concentrations. Interacts with ADCY6 and stimulates its adenylyl cyclase activity. Interacts with ADCY2 and ADCY5. Stimulates the ADCY5 adenylyl cyclase activity. Interaction with SASH1.

It localises to the cell membrane. In terms of biological role, guanine nucleotide-binding proteins (G proteins) function as transducers in numerous signaling pathways controlled by G protein-coupled receptors (GPCRs). Signaling involves the activation of adenylyl cyclases, resulting in increased levels of the signaling molecule cAMP. GNAS functions downstream of several GPCRs, including beta-adrenergic receptors. Stimulates the Ras signaling pathway via RAPGEF2. The protein is Guanine nucleotide-binding protein G(s) subunit alpha (GNAS) of Cricetulus griseus (Chinese hamster).